A 287-amino-acid chain; its full sequence is 4-diphosphocytidyl-2-C-methyl-D-erythritol kinase (287 aa).

Residue K11 is part of the active site. An ATP-binding site is contributed by 93–103; it reads PFGAGLGGGSS. Residue D135 is part of the active site.

Belongs to the GHMP kinase family. IspE subfamily.

The enzyme catalyses 4-CDP-2-C-methyl-D-erythritol + ATP = 4-CDP-2-C-methyl-D-erythritol 2-phosphate + ADP + H(+). It functions in the pathway isoprenoid biosynthesis; isopentenyl diphosphate biosynthesis via DXP pathway; isopentenyl diphosphate from 1-deoxy-D-xylulose 5-phosphate: step 3/6. Functionally, catalyzes the phosphorylation of the position 2 hydroxy group of 4-diphosphocytidyl-2C-methyl-D-erythritol. The polypeptide is 4-diphosphocytidyl-2-C-methyl-D-erythritol kinase (Pelodictyon phaeoclathratiforme (strain DSM 5477 / BU-1)).